A 706-amino-acid polypeptide reads, in one-letter code: Frizzled-6 (706 aa).

An N-terminal signal peptide occupies residues Met-1–Gly-18. The FZ domain occupies His-19–Thr-132. Residues His-19–Phe-201 lie on the Extracellular side of the membrane. 5 disulfides stabilise this stretch: Cys-24–Cys-85, Cys-32–Cys-78, Cys-69–Cys-106, Cys-95–Cys-129, and Cys-99–Cys-123. N-linked (GlcNAc...) asparagine glycosylation is present at Asn-38. Residues Ile-202–Ile-222 form a helical membrane-spanning segment. The Cytoplasmic portion of the chain corresponds to Asp-223–Pro-233. Residues Ile-234 to Leu-254 traverse the membrane as a helical segment. Over Gly-255–Val-284 the chain is Extracellular. A helical transmembrane segment spans residues Leu-285–Ile-305. Residues Thr-306–Ala-324 lie on the Cytoplasmic side of the membrane. The chain crosses the membrane as a helical span at residues Val-325 to Met-345. Residues Asn-346–Phe-370 lie on the Extracellular side of the membrane. The N-linked (GlcNAc...) asparagine glycan is linked to Asn-352. Residues Val-371–Ile-391 traverse the membrane as a helical segment. Residues Ser-392–Arg-416 are Cytoplasmic-facing. Residues Ile-417 to Tyr-437 form a helical membrane-spanning segment. Over Glu-438–Leu-473 the chain is Extracellular. Residues Ala-474 to Val-494 form a helical membrane-spanning segment. Topologically, residues Gly-495–Thr-706 are cytoplasmic. The short motif at Lys-498 to Trp-503 is the Lys-Thr-X-X-X-Trp motif, mediates interaction with the PDZ domain of Dvl family members element. The tract at residues Glu-588 to Thr-706 is disordered. Residues Ala-646–Ile-658 are compositionally biased toward basic and acidic residues. Residue Ser-653 is modified to Phosphoserine. Residues Gly-662–Pro-672 show a composition bias toward polar residues. Residues Ser-673 to Ser-685 show a composition bias toward low complexity. Positions Val-694–Thr-706 are enriched in basic and acidic residues.

It belongs to the G-protein coupled receptor Fz/Smo family. In terms of assembly, interacts with LMBR1L. Post-translationally, ubiquitinated by ZNRF3, leading to its degradation by the proteasome. As to expression, detected in adult heart, brain, placenta, lung, liver, skeletal muscle, kidney, pancreas, thymus, prostate, testis, ovary, small intestine and colon. In the fetus, expressed in brain, lung, liver and kidney.

It localises to the membrane. The protein resides in the cell membrane. The protein localises to the cell surface. Its subcellular location is the apical cell membrane. It is found in the cytoplasmic vesicle membrane. It localises to the endoplasmic reticulum membrane. Receptor for Wnt proteins. Most of frizzled receptors are coupled to the beta-catenin canonical signaling pathway, which leads to the activation of disheveled proteins, inhibition of GSK-3 kinase, nuclear accumulation of beta-catenin and activation of Wnt target genes. A second signaling pathway involving PKC and calcium fluxes has been seen for some family members, but it is not yet clear if it represents a distinct pathway or if it can be integrated in the canonical pathway, as PKC seems to be required for Wnt-mediated inactivation of GSK-3 kinase. Both pathways seem to involve interactions with G-proteins. May be involved in transduction and intercellular transmission of polarity information during tissue morphogenesis and/or in differentiated tissues. Together with FZD3, is involved in the neural tube closure and plays a role in the regulation of the establishment of planar cell polarity (PCP), particularly in the orientation of asymmetric bundles of stereocilia on the apical faces of a subset of auditory and vestibular sensory cells located in the inner ear. The sequence is that of Frizzled-6 (FZD6) from Homo sapiens (Human).